The primary structure comprises 469 residues: Uridine kinase-like protein 4 (469 aa).

The segment at 46 to 249 is uridine kinase; sequence QRQPFVIGVA…IVQHICTKLG (204 aa). Positions 259–469 are uracil phosphoribosyltransferase; that stretch reads NLYVIHSTFQ…GDRYFGTDDD (211 aa). GTP-binding positions include lysine 283, arginine 292, and 326–329; that span reads CKRL. Positions 336 and 361 each coordinate 5-phospho-alpha-D-ribose 1-diphosphate. Arginine 381 serves as a coordination point for GTP. 5-phospho-alpha-D-ribose 1-diphosphate is bound by residues aspartate 387, 392-395, and glutamate 458; that span reads TGNS. 457–459 serves as a coordination point for uracil; sequence GEF.

This sequence in the N-terminal section; belongs to the uridine kinase family. In the C-terminal section; belongs to the UPRTase family. Mg(2+) serves as cofactor.

The enzyme catalyses UMP + diphosphate = 5-phospho-alpha-D-ribose 1-diphosphate + uracil. It carries out the reaction cytidine + ATP = CMP + ADP + H(+). It catalyses the reaction uridine + ATP = UMP + ADP + H(+). The protein operates within pyrimidine metabolism; UMP biosynthesis via salvage pathway; UMP from uracil: step 1/1. It participates in pyrimidine metabolism; CTP biosynthesis via salvage pathway; CTP from cytidine: step 1/3. It functions in the pathway pyrimidine metabolism; UMP biosynthesis via salvage pathway; UMP from uridine: step 1/1. Allosterically activated by GTP. Involved in the pyrimidine salvage pathway. The uracil phosphoribosyltransferase (UPRT) activity, that catalyzes the conversion of uracil and 5-phospho-alpha-D-ribose 1-diphosphate (PRPP) to UMP and diphosphate, is unsure. This is Uridine kinase-like protein 4 (UKL4) from Arabidopsis thaliana (Mouse-ear cress).